Reading from the N-terminus, the 265-residue chain is Undecaprenyl-diphosphatase (265 aa).

7 consecutive transmembrane segments (helical) span residues 38-58 (RSDFFNIVIQAGAILAICLAL), 75-95 (RDYVLKVGVAFLVTAVVGLIV), 108-128 (PVAWALLIGGVWMLVAEHFAG), 135-155 (VVTWKVAIAVGLAQVVAGVFP), 181-201 (FVFMVGIPTMFAASGYALLEM), 215-235 (VAVAFVAATITGFVVVKWLLG), and 244-264 (VFAVYRMLLGAALLLWLPAAA).

The protein belongs to the UppP family.

It is found in the cell inner membrane. The enzyme catalyses di-trans,octa-cis-undecaprenyl diphosphate + H2O = di-trans,octa-cis-undecaprenyl phosphate + phosphate + H(+). Catalyzes the dephosphorylation of undecaprenyl diphosphate (UPP). Confers resistance to bacitracin. This chain is Undecaprenyl-diphosphatase, found in Xanthomonas euvesicatoria pv. vesicatoria (strain 85-10) (Xanthomonas campestris pv. vesicatoria).